The chain runs to 120 residues: cAMP-responsive element-binding protein-like 2 (120 aa).

The segment at 1–24 (MDDSKVVGGKVKKPGKRGRKPAKI) is disordered. Residues 10 to 21 (KVKKPGKRGRKP) are compositionally biased toward basic residues. In terms of domain architecture, bZIP spans 23–86 (KIDLKAKLER…MAMDQGKIPS (64 aa)). The interval 29–60 (KLERSRQSARECRARKKLRYQYLEELVSSRER) is basic motif. Residues 62 to 69 (ICALREEL) are leucine-zipper. The segment at 93–120 (TGEEQSKSQQNSSRHMKAGKTDANSNSW) is disordered.

Belongs to the bZIP family. ATF subfamily. Interacts with CREB1; regulates CREB1 phosphorylation, stability and transcriptional activity. Interacts with immediate-early (IE) protein BICP22 of bovine herpesvirus-1 (BHV-1). In terms of processing, phosphorylated by AMPK.

The protein resides in the nucleus. In terms of biological role, probable regulator of CREB1 transcriptional activity which is involved in adipose cells differentiation. May also play a regulatory role in the cell cycle. This is cAMP-responsive element-binding protein-like 2 (CREBL2) from Bos taurus (Bovine).